A 264-amino-acid chain; its full sequence is Undecaprenyl-diphosphatase (264 aa).

7 helical membrane-spanning segments follow: residues Arg38–Phe58, Arg75–Val95, Val106–Tyr126, Val136–Gly156, Phe181–Met201, Val217–Ile237, and Phe242–Ser262.

The protein belongs to the UppP family.

It is found in the cell inner membrane. The enzyme catalyses di-trans,octa-cis-undecaprenyl diphosphate + H2O = di-trans,octa-cis-undecaprenyl phosphate + phosphate + H(+). Its function is as follows. Catalyzes the dephosphorylation of undecaprenyl diphosphate (UPP). Confers resistance to bacitracin. This chain is Undecaprenyl-diphosphatase, found in Stenotrophomonas maltophilia (strain R551-3).